The following is a 215-amino-acid chain: Ran-specific GTPase-activating protein 1 (215 aa).

2 stretches are compositionally biased toward basic and acidic residues: residues 1–18 (MSAE…EEQK) and 26–35 (VASKQTEEAK). The interval 1 to 78 (MSAEQEKKTQ…ASPEVHFEPI (78 aa)) is disordered. Residue serine 70 is modified to Phosphoserine. In terms of domain architecture, RanBD1 spans 74-210 (HFEPIVKLSA…FEKYQEENAK (137 aa)).

This sequence belongs to the RANBP1 family.

The protein resides in the cytoplasm. Stimulates the GTPase activity in the presence of RNA1. May potentiate the action of RanGAP1 (RNA1), thus playing the role of a negative regulator. This is Ran-specific GTPase-activating protein 1 (sbp1) from Schizosaccharomyces pombe (strain 972 / ATCC 24843) (Fission yeast).